The sequence spans 635 residues: Threonine--tRNA ligase (635 aa).

Residues 1-61 (MVSIRLPDGS…DHDASLAIVT (61 aa)) form the TGS domain. Residues 242–533 (DHRKLGKQLD…LIEHHAGAMP (292 aa)) form a catalytic region. Zn(2+) is bound by residues C333, H384, and H510.

Belongs to the class-II aminoacyl-tRNA synthetase family. In terms of assembly, homodimer. Requires Zn(2+) as cofactor.

The protein resides in the cytoplasm. It carries out the reaction tRNA(Thr) + L-threonine + ATP = L-threonyl-tRNA(Thr) + AMP + diphosphate + H(+). Catalyzes the attachment of threonine to tRNA(Thr) in a two-step reaction: L-threonine is first activated by ATP to form Thr-AMP and then transferred to the acceptor end of tRNA(Thr). Also edits incorrectly charged L-seryl-tRNA(Thr). The chain is Threonine--tRNA ligase from Burkholderia multivorans (strain ATCC 17616 / 249).